We begin with the raw amino-acid sequence, 274 residues long: Purine nucleoside phosphorylase YlmD (274 aa).

46–47 (LH) is a binding site for inosine. Positions 80, 125, 142, 182, 183, 242, and 245 each coordinate Zn(2+). An inosine-binding site is contributed by R262.

This sequence belongs to the purine nucleoside phosphorylase YfiH/LACC1 family. Requires Zn(2+) as cofactor.

The enzyme catalyses adenosine + phosphate = alpha-D-ribose 1-phosphate + adenine. It carries out the reaction S-methyl-5'-thioadenosine + phosphate = 5-(methylsulfanyl)-alpha-D-ribose 1-phosphate + adenine. The catalysed reaction is inosine + phosphate = alpha-D-ribose 1-phosphate + hypoxanthine. It catalyses the reaction adenosine + H2O + H(+) = inosine + NH4(+). In terms of biological role, purine nucleoside enzyme that catalyzes the phosphorolysis of adenosine and inosine nucleosides, yielding D-ribose 1-phosphate and the respective free bases, adenine and hypoxanthine. Also catalyzes the phosphorolysis of S-methyl-5'-thioadenosine into adenine and S-methyl-5-thio-alpha-D-ribose 1-phosphate. Also has adenosine deaminase activity. This Geobacillus stearothermophilus (strain DSM 13240 / CIP 106956 / 10) protein is Purine nucleoside phosphorylase YlmD.